Here is a 156-residue protein sequence, read N- to C-terminus: ATP synthase subunit b (156 aa).

The chain crosses the membrane as a helical span at residues Ile7–Pro27.

The protein belongs to the ATPase B chain family. F-type ATPases have 2 components, F(1) - the catalytic core - and F(0) - the membrane proton channel. F(1) has five subunits: alpha(3), beta(3), gamma(1), delta(1), epsilon(1). F(0) has three main subunits: a(1), b(2) and c(10-14). The alpha and beta chains form an alternating ring which encloses part of the gamma chain. F(1) is attached to F(0) by a central stalk formed by the gamma and epsilon chains, while a peripheral stalk is formed by the delta and b chains.

The protein localises to the cell inner membrane. Its function is as follows. F(1)F(0) ATP synthase produces ATP from ADP in the presence of a proton or sodium gradient. F-type ATPases consist of two structural domains, F(1) containing the extramembraneous catalytic core and F(0) containing the membrane proton channel, linked together by a central stalk and a peripheral stalk. During catalysis, ATP synthesis in the catalytic domain of F(1) is coupled via a rotary mechanism of the central stalk subunits to proton translocation. Functionally, component of the F(0) channel, it forms part of the peripheral stalk, linking F(1) to F(0). This chain is ATP synthase subunit b, found in Bordetella bronchiseptica (strain ATCC BAA-588 / NCTC 13252 / RB50) (Alcaligenes bronchisepticus).